Consider the following 422-residue polypeptide: Zinc finger protein Gfi-1 (422 aa).

Residues 1-20 (MPRSFLVKSKKAHSYHQPRS) form an SNAG domain region. The interval 1 to 107 (MPRSFLVKSK…SPASEKSVCP (107 aa)) is disordered. Serine 20 carries the post-translational modification Phosphoserine. Positions 34–47 (APGGADGTSSAGGA) are enriched in low complexity. Serine 56 is modified (phosphoserine). A compositionally biased stretch (polar residues) spans 57–72 (PESQLTEAPDRSSASP). The tract at residues 140–257 (RPCAALDRGA…LLLGGGSYKC (118 aa)) is required for interaction with RELA. 6 C2H2-type zinc fingers span residues 255–278 (YKCIKCSKVFSTPHGLEVHVRRSH), 284–306 (FACEMCGKTFGHAVSLEQHKAVH), 312–334 (FDCKICGKSFKRSSTLSTHLLIH), 340–362 (YPCQYCGKRFHQKSDMKKHTFIH), 368–390 (HKCQVCGKAFSQSSNLITHSRKH), and 396–419 (FGCDLCGKGFQRKVDLRRHRETQH).

In terms of assembly, interacts with U2AF1L4. Component of RCOR-GFI-KDM1A-HDAC complexes. Interacts directly with RCOR1, KDM1A and HDAC2. Also interacts with HDAC1 and HDAC3. Interacts (via the zinc-finger domain) with ARIH2; the interaction prevents GFI1 ubiquitination and proteasomal degradation. Interacts with PIAS3; the interaction relieves the inhibitory effect of PIAS3 on STAT3-mediated transcriptional activity. Forms a complex with EHMT2 and HDAC1 to promote 'Lys-9' dimethylation of H3 (H3K9Me2) and repress expression of target genes. Interacts directly with EHMT2. Component of the GFI1-AJUBA-HDAC1 repressor complex. Interacts directly with AJUBA (via ITS LIM domains); the interaction results in the HDAC-dependent corepression of a subset of GFI1 target genes and, occurs independently of the SNAG domain. Interacts with SPI1; the interaction inhibits SPI1 transcriptional activity targeted at macrophage-specific genes, repressing macrophage differentiation of myeloid progenitor cells and promoting granulocyte commitment. Interacts with RUNX1T1; the interaction represses HDAC-mediated transcriptional activity. Interacts with RELA; the interaction occurs on liposaccharide (LPS) stimulation and controls RELA DNA binding activity and regulates endotoxin-mediated TOLL-like receptor inflammatory response. Interacts (via the C-terminal zinc fingers) with ZBTB17; the interaction results in the recruitment of GFI1 to the CDKN1A/p21 and CDKNIB promoters and repression of transcription. In terms of processing, ubiquitinated.

It localises to the nucleus. Functionally, transcription repressor essential for hematopoiesis. Functions in a cell-context and development-specific manner. Binds to 5'-TAAATCAC[AT]GCA-3' in the promoter region of a large number of genes. Component of several complexes, including the EHMT2-GFI1-HDAC1, AJUBA-GFI1-HDAC1 and RCOR-GFI-KDM1A-HDAC complexes, that suppress, via histone deacetylase (HDAC) recruitment, a number of genes implicated in multilineage blood cell development. Regulates neutrophil differentiation, promotes proliferation of lymphoid cells, and is required for granulocyte development. Inhibits SPI1 transcriptional activity at macrophage-specific genes, repressing macrophage differentiation of myeloid progenitor cells and promoting granulocyte commitment. Mediates, together with U2AF1L4, the alternative splicing of CD45 and controls T-cell receptor signaling. Regulates the endotoxin-mediated Toll-like receptor (TLR) inflammatory response by antagonizing RELA. Cooperates with CBFA2T2 to regulate ITGB1-dependent neurite growth. Controls cell-cycle progression by repressing CDKNIA/p21 transcription in response to TGFB1 via recruitment of GFI1 by ZBTB17 to the CDKNIA/p21 and CDKNIB promoters. Required for the maintenance of inner ear hair cells. In addition to its role in transcription, acts as a substrate adapter for PRMT1 in the DNA damage response: facilitates the recognition of TP53BP1 and MRE11 substrates by PRMT1, promoting their methylation and the DNA damage response. The chain is Zinc finger protein Gfi-1 (GFI1) from Canis lupus familiaris (Dog).